The primary structure comprises 256 residues: N-glycosylase/DNA lyase (256 aa).

Q31, S58, and W69 together coordinate 8-oxoguanine. The helix-hairpin-helix stretch occupies residues T125 to L184. K140 functions as the Schiff-base intermediate with DNA in the catalytic mechanism. The 8-oxoguanine site is built by F144 and P170. Residue D172 is part of the active site. 8-oxoguanine contacts are provided by D218 and W222.

The protein belongs to the archaeal N-glycosylase/DNA lyase (AGOG) family.

It catalyses the reaction 2'-deoxyribonucleotide-(2'-deoxyribose 5'-phosphate)-2'-deoxyribonucleotide-DNA = a 3'-end 2'-deoxyribonucleotide-(2,3-dehydro-2,3-deoxyribose 5'-phosphate)-DNA + a 5'-end 5'-phospho-2'-deoxyribonucleoside-DNA + H(+). Functionally, DNA repair enzyme that is part of the base excision repair (BER) pathway; protects from oxidative damage by removing the major product of DNA oxidation, 8-oxoguanine (GO), from single- and double-stranded DNA substrates. In Pyrobaculum aerophilum (strain ATCC 51768 / DSM 7523 / JCM 9630 / CIP 104966 / NBRC 100827 / IM2), this protein is N-glycosylase/DNA lyase.